The primary structure comprises 107 residues: U1-lycotoxin-Ls1b (107 aa).

The signal sequence occupies residues 1–20 (MMKVLVVVALLVTLISYSSG). The propeptide occupies 21-41 (EGIDDLEADELLSLMANEQTR). 4 disulfides stabilise this stretch: cysteine 44-cysteine 59, cysteine 51-cysteine 68, cysteine 58-cysteine 86, and cysteine 70-cysteine 84.

Belongs to the neurotoxin 19 (CSTX) family. 04 (U1-Lctx) subfamily. In terms of tissue distribution, expressed by the venom gland.

The protein localises to the secreted. The protein is U1-lycotoxin-Ls1b of Lycosa singoriensis (Wolf spider).